Consider the following 340-residue polypeptide: Polyporopepsin (340 aa).

The Peptidase A1 domain maps to 14-330 (YVVNVGVGSP…DTTNKRLGLA (317 aa)). Asp32 is a catalytic residue. An N-linked (GlcNAc...) asparagine glycan is attached at Asn192. Residue Asp212 is part of the active site. The N-linked (GlcNAc...) asparagine glycan is linked to Asn238.

It belongs to the peptidase A1 family.

The enzyme catalyses Milk clotting activity, broad specificity, but fails to cleave 15-Leu-|-Tyr-16 or 16-Tyr-|-Leu-17 of insulin B chain.. This Irpex lacteus (Milk-white toothed polypore) protein is Polyporopepsin.